Consider the following 364-residue polypeptide: Uroporphyrinogen decarboxylase (364 aa).

Residues R28–R32, D78, Y160, T215, and H333 contribute to the substrate site.

This sequence belongs to the uroporphyrinogen decarboxylase family. In terms of assembly, homodimer.

The protein resides in the cytoplasm. It carries out the reaction uroporphyrinogen III + 4 H(+) = coproporphyrinogen III + 4 CO2. It participates in porphyrin-containing compound metabolism; protoporphyrin-IX biosynthesis; coproporphyrinogen-III from 5-aminolevulinate: step 4/4. Catalyzes the decarboxylation of four acetate groups of uroporphyrinogen-III to yield coproporphyrinogen-III. This is Uroporphyrinogen decarboxylase from Burkholderia pseudomallei (strain 668).